Here is a 388-residue protein sequence, read N- to C-terminus: Probable peptidoglycan glycosyltransferase FtsW (388 aa).

Transmembrane regions (helical) follow at residues 16 to 36, 54 to 74, 82 to 102, 109 to 129, 144 to 164, 167 to 187, 189 to 209, 233 to 253, 277 to 297, 310 to 330, and 342 to 362; these read LVLI…SSSV, VFAL…PSQS, WFLL…EIGG, LVVM…LFLA, TAVI…LLQP, GTTV…GAPF, YFVI…INSP, SQAL…GASV, WLGV…MFAV, ALVV…NVGV, and LPFV…IGLV.

This sequence belongs to the SEDS family. FtsW subfamily.

It is found in the cell inner membrane. The enzyme catalyses [GlcNAc-(1-&gt;4)-Mur2Ac(oyl-L-Ala-gamma-D-Glu-L-Lys-D-Ala-D-Ala)](n)-di-trans,octa-cis-undecaprenyl diphosphate + beta-D-GlcNAc-(1-&gt;4)-Mur2Ac(oyl-L-Ala-gamma-D-Glu-L-Lys-D-Ala-D-Ala)-di-trans,octa-cis-undecaprenyl diphosphate = [GlcNAc-(1-&gt;4)-Mur2Ac(oyl-L-Ala-gamma-D-Glu-L-Lys-D-Ala-D-Ala)](n+1)-di-trans,octa-cis-undecaprenyl diphosphate + di-trans,octa-cis-undecaprenyl diphosphate + H(+). Its pathway is cell wall biogenesis; peptidoglycan biosynthesis. In terms of biological role, peptidoglycan polymerase that is essential for cell division. This Thiomicrospira cyclica (strain DSM 14477 / JCM 11371 / ALM1) (Thioalkalimicrobium cyclicum) protein is Probable peptidoglycan glycosyltransferase FtsW.